The primary structure comprises 72 residues: Large ribosomal subunit protein bL28 (72 aa).

Belongs to the bacterial ribosomal protein bL28 family.

This chain is Large ribosomal subunit protein bL28, found in Chlorobium phaeobacteroides (strain BS1).